A 1166-amino-acid polypeptide reads, in one-letter code: DNA-directed RNA polymerase subunit beta (1166 aa).

It belongs to the RNA polymerase beta chain family. The RNAP catalytic core consists of 2 alpha, 1 beta, 1 beta' and 1 omega subunit. When a sigma factor is associated with the core the holoenzyme is formed, which can initiate transcription.

The enzyme catalyses RNA(n) + a ribonucleoside 5'-triphosphate = RNA(n+1) + diphosphate. DNA-dependent RNA polymerase catalyzes the transcription of DNA into RNA using the four ribonucleoside triphosphates as substrates. This chain is DNA-directed RNA polymerase subunit beta, found in Nocardioides sp. (strain ATCC BAA-499 / JS614).